A 220-amino-acid polypeptide reads, in one-letter code: MEFLFGRRKTPEELLRQNQRALNRAMRELDRERQKLEQQEKKIIADIKKMAKQGQMDAVKIMAKDLVRTRRYVKKFIMMRANIQAVSLKIQTLKSNNSMAQAMKGVTKAMATMNRQLKLPQIQKIMMEFEKQSEIMDMKEEMMNDAIDDAMGDEDDEEESDAVVSQVLDELGLTLTDELSNLPSTGGSLSVAGAKKGEATAALADADADLEERLNNLRRD.

Coiled coils occupy residues 12 to 53 and 198 to 219; these read EELL…MAKQ and EATAALADADADLEERLNNLRR. Residues 196–220 form a disordered region; that stretch reads KGEATAALADADADLEERLNNLRRD. Residues 208–218 carry the MIT-interacting motif motif; it reads ADLEERLNNLR. Over residues 211 to 220 the composition is skewed to basic and acidic residues; that stretch reads EERLNNLRRD.

This sequence belongs to the SNF7 family. In terms of assembly, probable core component of the endosomal sorting required for transport complex III (ESCRT-III). ESCRT-III components are thought to multimerize to form a flat lattice on the perimeter membrane of the endosome.

The protein resides in the late endosome membrane. The protein localises to the cytoplasm. Functionally, probable core component of the endosomal sorting required for transport complex III (ESCRT-III) which is involved in multivesicular bodies (MVBs) formation and sorting of endosomal cargo proteins into MVBs. MVBs contain intraluminal vesicles (ILVs) that are generated by invagination and scission from the limiting membrane of the endosome and mostly are delivered to lysosomes enabling degradation of membrane proteins, such as stimulated growth factor receptors, lysosomal enzymes and lipids. The sequence is that of Charged multivesicular body protein 2a (chmp2a) from Xenopus laevis (African clawed frog).